Consider the following 148-residue polypeptide: MVDWTDAERSAIVGLWGKISVDEIGPQALARLLIVSPWTQRHFSTFGNLSTPAAIMGNPAVAKHGKTVMHGLDRAVQNLDDIKNAYTALSVMHSEKLHVDPDNFRLLADCITVCVAAKLGPTVFSADIQEAFQKFLAVVVSALGRQYH.

The region spanning 3–148 (DWTDAERSAI…VVSALGRQYH (146 aa)) is the Globin domain. The heme b site is built by H64 and H93.

It belongs to the globin family. In terms of assembly, heterotetramer of two alpha chains and two beta chains. Red blood cells.

Its function is as follows. Involved in oxygen transport from gills to the various peripheral tissues. The protein is Hemoglobin subunit beta (hbb) of Salmo salar (Atlantic salmon).